Reading from the N-terminus, the 158-residue chain is uncharacterized protein (158 aa).

The next 2 membrane-spanning stretches (helical) occupy residues 10–30 (LFFIFSGGLVFFFFEFFLNHF) and 40–60 (YITFYFIKNHPSLFLLFNFFL).

Its subcellular location is the membrane. This is an uncharacterized protein from Schizosaccharomyces pombe (strain 972 / ATCC 24843) (Fission yeast).